Consider the following 180-residue polypeptide: Adenine phosphoribosyltransferase (180 aa).

Position 2 is an N-acetylalanine (Ala-2). Residues Ser-15 and Ser-30 each carry the phosphoserine modification. At Tyr-60 the chain carries Phosphotyrosine. Ser-66 bears the Phosphoserine mark. The residue at position 114 (Lys-114) is an N6-acetyllysine. At Thr-135 the chain carries Phosphothreonine.

This sequence belongs to the purine/pyrimidine phosphoribosyltransferase family. As to quaternary structure, homodimer.

Its subcellular location is the cytoplasm. The catalysed reaction is AMP + diphosphate = 5-phospho-alpha-D-ribose 1-diphosphate + adenine. It participates in purine metabolism; AMP biosynthesis via salvage pathway; AMP from adenine: step 1/1. In terms of biological role, catalyzes a salvage reaction resulting in the formation of AMP, that is energically less costly than de novo synthesis. This Dipodillus campestris (North African gerbil) protein is Adenine phosphoribosyltransferase.